Here is a 599-residue protein sequence, read N- to C-terminus: Dehydrogenase eriK (599 aa).

The first 20 residues, 1–20, serve as a signal peptide directing secretion; it reads MAFLKARLAALLSVAVSCSA. FAD-binding positions include 43-44 and 64-65; these read TA and EG. Asn93 carries N-linked (GlcNAc...) asparagine glycosylation. 122–125 serves as a coordination point for FAD; the sequence is NGMY. N-linked (GlcNAc...) asparagine glycans are attached at residues Asn169, Asn191, Asn234, Asn260, Asn284, Asn319, Asn339, Asn353, Asn365, Asn370, Asn398, Asn456, and Asn518. FAD is bound by residues Ala569 and 580–581; that span reads TQ.

The protein belongs to the GMC oxidoreductase family. In terms of assembly, homodimer. The cofactor is FAD.

Dehydrogenase; part of the gene cluster that mediates the biosynthesis of erinacines, cyathane-xylosides that show unique biological activities, including leishmanicidal activity, stimulating activity for nerve growth-factor synthesis, and agonistic activity toward the kappa opioid receptor. The role of the dehydrogenase eriK within the pathway has still to be determined. The first step of the erinacines biosynthesis pathway is catalyzed by the geranylgeranyl diphosphate (GGPP) synthase eriE via conversion of farnesyl pyrophosphate and isopentyl pyrophosphate into geranylgeranyl pyrophosphate (GGPP). GGPP is then substrate of the diterpene cyclase eriG for the production of cyatha-3,12-diene. The cytochrome P450 monooxygenase eriI then hydroxylates cyatha-3,12-diene at C-14 of the seven-membered ring to produce erinacol, which is further hydroxylated at C-15 by the cytochrome P450 monooxygenase eriC to yield cyathadiol. The cytochrome P450 monooxygenase eriA then catalyzes C-11 hydroxylation in the presence of the short chain dehydrogenase/reductase (SDR) eriH, which leads to the production of cyathatriol. The acetyltransferase eriL converts cyathatriol into 11-O-acetyl-cyathatriol. The SDR eriH catalyzes further oxidation of 11-O-acetyl-cyathatriol into 1-O-acetylcyathin A3. Finally, the glycosyl transferase eriJ tranfers xylose from UDP-xylose onto C-14 of 11-O-acetyl-cyathatriol to form eracine Q. EriJ is also able to convert 11-O-acetyl-cyathatriol to eracine Q2 by using UDP-D-glucose as cosubstrate, but at a lower rate. This is Dehydrogenase eriK from Hericium erinaceus (Lion's mane mushroom).